The following is a 380-amino-acid chain: Lipoyl synthase, mitochondrial (380 aa).

7 residues coordinate [4Fe-4S] cluster: Cys-104, Cys-109, Cys-115, Cys-135, Cys-139, Cys-142, and Ser-350. A Radical SAM core domain is found at 120 to 339 (EHGTQTATIM…ETRGNELGFL (220 aa)).

This sequence belongs to the radical SAM superfamily. Lipoyl synthase family. It depends on [4Fe-4S] cluster as a cofactor.

Its subcellular location is the mitochondrion. The enzyme catalyses [[Fe-S] cluster scaffold protein carrying a second [4Fe-4S](2+) cluster] + N(6)-octanoyl-L-lysyl-[protein] + 2 oxidized [2Fe-2S]-[ferredoxin] + 2 S-adenosyl-L-methionine + 4 H(+) = [[Fe-S] cluster scaffold protein] + N(6)-[(R)-dihydrolipoyl]-L-lysyl-[protein] + 4 Fe(3+) + 2 hydrogen sulfide + 2 5'-deoxyadenosine + 2 L-methionine + 2 reduced [2Fe-2S]-[ferredoxin]. Its pathway is protein modification; protein lipoylation via endogenous pathway; protein N(6)-(lipoyl)lysine from octanoyl-[acyl-carrier-protein]: step 2/2. Functionally, catalyzes the radical-mediated insertion of two sulfur atoms into the C-6 and C-8 positions of the octanoyl moiety bound to the lipoyl domains of lipoate-dependent enzymes, thereby converting the octanoylated domains into lipoylated derivatives. The sequence is that of Lipoyl synthase, mitochondrial from Culex quinquefasciatus (Southern house mosquito).